Consider the following 121-residue polypeptide: Large ribosomal subunit protein bL19 (121 aa).

This sequence belongs to the bacterial ribosomal protein bL19 family.

This protein is located at the 30S-50S ribosomal subunit interface and may play a role in the structure and function of the aminoacyl-tRNA binding site. In Legionella pneumophila (strain Paris), this protein is Large ribosomal subunit protein bL19.